A 142-amino-acid chain; its full sequence is MAKKVTGYLKLQVPAGAANPSPPIGPALGQRGLNIMEFCKAFNAQTQKEEKNTPIPVVITIYADRSFTFELKTPPMSFFLKQAAKIQSGSKLPGRDSAGKVTTAQVREIAEKKMKDLNCDSIDSAMRMVEGSARSMGLQVEG.

It belongs to the universal ribosomal protein uL11 family. Part of the ribosomal stalk of the 50S ribosomal subunit. Interacts with L10 and the large rRNA to form the base of the stalk. L10 forms an elongated spine to which L12 dimers bind in a sequential fashion forming a multimeric L10(L12)X complex. In terms of processing, one or more lysine residues are methylated.

In terms of biological role, forms part of the ribosomal stalk which helps the ribosome interact with GTP-bound translation factors. The protein is Large ribosomal subunit protein uL11 of Rhodopseudomonas palustris (strain BisB5).